Consider the following 745-residue polypeptide: MHWAKILGVGIGAAALLGLGIILGHFAIPKATEPLASSVSDSQDLDLAILDSVMGQLDASRIRENLRELSKEPHVATSARDEALVQLLLGRWKDSASGLDTAKTYEYTVLLSFPSTEQPNSVEVVGPNGTVFHSFQPFEKNLTGEQAEPNVLQPYAAYAPPGTPKGPLVYANRGSEDDFKKLEAEGINLKGTIALTRYGSVGRGAKAINAARHGVVGVLVYTDPGDINDGKSLPNETFPNSWGLPPSGVERGSYYEYFGDPLTPYLPAHPVSFRLDPHNISGFPPIPTQPIGFEDAKNLLCNLNGTSAPDSWQGALGCEYKLGPGFEPNGNFPAGSEVKVSVYNRLELRNSSNVLGIIQGAVEPDRYVIYGNHRDSWVHGAVDPSSGTAVLLEISRVLGTLLKKGTWRPRRSIIFASWGAEEFGLIGSTEFTEEFLSKLQERTVTYINVDISVFSNATLRAQGTPPVQSVIFSATKEISAPGSSGLSIYDNWIRYTNRSSPVYGLVPSMGTLGAGSDYASFIHFLGITSMDLAYTYDRSKTSARIYPTYHTAFDTFDYVEKFLDPGFSSHQAVARTAGSVLLRLSDSLFLPLNVSDYSETLQSFLQAAQENLGALLESHNISLGPLVTAVEKFKAAAAALNQHILTLQKSSPDPLQVRMVNDQLMLLERAFLNPRAFPEERYYSHVLWAPNTASVATFPGLANAYARAQEINSGAEAWAEVERQLSIAVMALEGAAATLQPVTDL.

Residues 1–6 (MHWAKI) lie on the Cytoplasmic side of the membrane. Residues 7–28 (LGVGIGAAALLGLGIILGHFAI) form a helical; Signal-anchor for type II membrane protein membrane-spanning segment. The Extracellular segment spans residues 29–745 (PKATEPLASS…AATLQPVTDL (717 aa)). N-linked (GlcNAc...) asparagine glycans are attached at residues asparagine 128, asparagine 141, and asparagine 235. Positions 263 and 266 each coordinate Ca(2+). N-linked (GlcNAc...) asparagine glycosylation is found at asparagine 279, asparagine 304, and asparagine 350. Cysteine 301 and cysteine 318 are joined by a disulfide. Residues histidine 373 and aspartate 383 each coordinate Zn(2+). Glutamate 421 functions as the Proton donor/acceptor in the catalytic mechanism. Residue glutamate 422 participates in Zn(2+) binding. The Ca(2+) site is built by glutamate 430 and glutamate 433. Aspartate 450 lines the Zn(2+) pocket. 2 N-linked (GlcNAc...) asparagine glycosylation sites follow: asparagine 456 and asparagine 497. Zn(2+) is bound at residue histidine 550. N-linked (GlcNAc...) asparagine glycans are attached at residues asparagine 593 and asparagine 620.

It belongs to the peptidase M28 family. M28B subfamily. As to quaternary structure, homodimer. The cofactor is Zn(2+). N-glycosylated. Detected on apical villi on the brush border membrane of ileum enterocytes (at protein level). Mainly expressed in the distal small intestine.

The protein localises to the apical cell membrane. Functionally, aminopeptidase with broad substrate specificity. Has lower activity with substrates that have Asp or Glu in the P2' position, or Pro in the P3' position. Lacks activity with substrates that have both Pro in the P3' position and Asp or Glu in the P2' position. Lacks carboxypeptidase activity. Lacks dipeptidyl-peptidase IV type activity. This is Aminopeptidase NAALADL1 (Naaladl1) from Rattus norvegicus (Rat).